Reading from the N-terminus, the 95-residue chain is Aspartyl/glutamyl-tRNA(Asn/Gln) amidotransferase subunit C (95 aa).

The protein belongs to the GatC family. As to quaternary structure, heterotrimer of A, B and C subunits.

The catalysed reaction is L-glutamyl-tRNA(Gln) + L-glutamine + ATP + H2O = L-glutaminyl-tRNA(Gln) + L-glutamate + ADP + phosphate + H(+). It catalyses the reaction L-aspartyl-tRNA(Asn) + L-glutamine + ATP + H2O = L-asparaginyl-tRNA(Asn) + L-glutamate + ADP + phosphate + 2 H(+). Functionally, allows the formation of correctly charged Asn-tRNA(Asn) or Gln-tRNA(Gln) through the transamidation of misacylated Asp-tRNA(Asn) or Glu-tRNA(Gln) in organisms which lack either or both of asparaginyl-tRNA or glutaminyl-tRNA synthetases. The reaction takes place in the presence of glutamine and ATP through an activated phospho-Asp-tRNA(Asn) or phospho-Glu-tRNA(Gln). The polypeptide is Aspartyl/glutamyl-tRNA(Asn/Gln) amidotransferase subunit C (Pseudomonas putida (strain ATCC 700007 / DSM 6899 / JCM 31910 / BCRC 17059 / LMG 24140 / F1)).